Reading from the N-terminus, the 260-residue chain is Phosphate import ATP-binding protein PstB 1 (260 aa).

In terms of domain architecture, ABC transporter spans 13 to 255 (VRVRDLNLWY…PHTKKAEDYI (243 aa)). 45-52 (GPSGCGKS) is a binding site for ATP.

This sequence belongs to the ABC transporter superfamily. Phosphate importer (TC 3.A.1.7) family. As to quaternary structure, the complex is composed of two ATP-binding proteins (PstB), two transmembrane proteins (PstC and PstA) and a solute-binding protein (PstS).

It is found in the cell inner membrane. The catalysed reaction is phosphate(out) + ATP + H2O = ADP + 2 phosphate(in) + H(+). Its function is as follows. Part of the ABC transporter complex PstSACB involved in phosphate import. Responsible for energy coupling to the transport system. This Chromohalobacter salexigens (strain ATCC BAA-138 / DSM 3043 / CIP 106854 / NCIMB 13768 / 1H11) protein is Phosphate import ATP-binding protein PstB 1.